A 505-amino-acid chain; its full sequence is Maturase K (505 aa).

This sequence belongs to the intron maturase 2 family. MatK subfamily.

Its subcellular location is the plastid. The protein localises to the chloroplast. Its function is as follows. Usually encoded in the trnK tRNA gene intron. Probably assists in splicing its own and other chloroplast group II introns. This chain is Maturase K, found in Ulmus parvifolia (Chinese elm).